A 21-amino-acid chain; its full sequence is Major outer membrane protein (21 aa).

Disulfide bond interactions within and between MOMP molecules and other components form high molecular-weight oligomers.

The protein localises to the cell outer membrane. Functionally, structural rigidity of the outer membrane of elementary bodies and porin forming, permitting diffusion of solutes through the intracellular reticulate body membrane. In Actinobacillus equuli, this protein is Major outer membrane protein.